A 292-amino-acid polypeptide reads, in one-letter code: Acetylglutamate kinase (292 aa).

Residues 64–65, Arg86, and Asn190 each bind substrate; that span reads GG.

This sequence belongs to the acetylglutamate kinase family. ArgB subfamily.

The protein localises to the cytoplasm. The catalysed reaction is N-acetyl-L-glutamate + ATP = N-acetyl-L-glutamyl 5-phosphate + ADP. Its pathway is amino-acid biosynthesis; L-arginine biosynthesis; N(2)-acetyl-L-ornithine from L-glutamate: step 2/4. Its function is as follows. Catalyzes the ATP-dependent phosphorylation of N-acetyl-L-glutamate. This Trichlorobacter lovleyi (strain ATCC BAA-1151 / DSM 17278 / SZ) (Geobacter lovleyi) protein is Acetylglutamate kinase.